The chain runs to 385 residues: 8-amino-7-oxononanoate synthase (385 aa).

Arginine 21 is a binding site for substrate. 108 to 109 (GF) serves as a coordination point for pyridoxal 5'-phosphate. Histidine 133 contributes to the substrate binding site. 3 residues coordinate pyridoxal 5'-phosphate: serine 179, histidine 207, and threonine 233. At lysine 236 the chain carries N6-(pyridoxal phosphate)lysine. Threonine 352 contributes to the substrate binding site.

This sequence belongs to the class-II pyridoxal-phosphate-dependent aminotransferase family. BioF subfamily. As to quaternary structure, homodimer. Pyridoxal 5'-phosphate is required as a cofactor.

It carries out the reaction 6-carboxyhexanoyl-[ACP] + L-alanine + H(+) = (8S)-8-amino-7-oxononanoate + holo-[ACP] + CO2. Its pathway is cofactor biosynthesis; biotin biosynthesis. Catalyzes the decarboxylative condensation of pimeloyl-[acyl-carrier protein] and L-alanine to produce 8-amino-7-oxononanoate (AON), [acyl-carrier protein], and carbon dioxide. This is 8-amino-7-oxononanoate synthase from Salmonella newport (strain SL254).